A 390-amino-acid polypeptide reads, in one-letter code: MAPLVKNHGEPQHAKILAIGTANPPNVYYQKDYPDFLFRVTKNEHRTDLREKFDRICEKSRTRKRYLHLTEEILKANPSIYTYGAPSLDVRQDMLNSEVPKLGQQAALKAIKEWGQPISKITHLIFCTASCVDMPGADFQLVKLLGLNPSVTRTMIYEAGCYAGATVLRLAKDFAENNEGARVLVVCAEITTVFFHGLTDTHLDILVGQALFADGASAVIVGANPEPKIERPLFEIVACRQTIIPNSEHGVVANIREMGFTYYLSGEVPKFVGGNVVDFLTKTFEKVDGKNKDWNSLFFSVHPGGPAIVDQVEEQLGLKEGKLRATRHVLSEYGNMGAPSVHFILDDMRKKSIEEGKSTTGEGLEWGVVIGIGPGLTVETAVLRSESIPC.

C161 is an active-site residue.

It belongs to the thiolase-like superfamily. Chalcone/stilbene synthases family. In terms of assembly, homodimer.

It carries out the reaction benzoyl-CoA + 3 malonyl-CoA + 3 H(+) = biphenyl-3,5-diol + 4 CO2 + 4 CoA. Type III polyketide synthase involved in the biosynthesis of the phytoalexins bisphenyls and dibenzofurans. Can also use salicoyl-CoA and malonyl-CoA to produce a diketide intermediate yielding 4-hydroxycoumarin after cyclization and enolization. Can also use m-hydroxybenzoyl-CoA as substrate, producing m-hydroxybenzoyl diacetic acid lactone as a derailment product. No activity with p-hydroxybenzoyl-CoA, CoA-linked cinnamic acids or acetyl-CoA. In Sorbus aucuparia (European mountain ash), this protein is 3,5-dihydroxybiphenyl synthase (BIS1).